The following is a 512-amino-acid chain: MLTMGTALSQQVDANWQTYIMIAVYFLILIVIGFYGYKQATGNLSEYMLGGRSIGPYITALSAGASDMSGWMIMGLPGSVYSTGLSAMWITIGLTLGAYINYFVVAPRLRVYTELAGDAITLPDFFKNRLNDKNNVLKIISGLIIVVFFTLYTHSGFVSGGKLFESAFGLDYHFGLILVAFIVIFYTFFGGYLAVSITDFFQGVIMLIAMVMVPIVAMMNLNGWGTFHDVAAMKPTNLNLFKGLSFIGIISLFSWGLGYFGQPHIIVRFMSIKSHKMLPKARRLGISWMAVGLLGAVAVGLTGIAFVPAYHIKLEDPETLFIVMSQVLFHPLVGGFLLAAILAAIMSTISSQLLVTSSSLTEDFYKLIRGEEKAKTHQKEFVMIGRLSVLVVAIVAIAIAWNPNDTILNLVGNAWAGFGASFSPLVLFALYWKGLTRAGAVSGMVSGALVVIVWIAWIKPLAHINEIFGLYEIIPGFIVSVIVTYVVSKLTKKPGAFVETDLNKVRDIVREK.

13 consecutive transmembrane segments (helical) span residues 16–36 (WQTYIMIAVYFLILIVIGFYG), 54–74 (IGPYITALSAGASDMSGWMIM), 85–105 (LSAMWITIGLTLGAYINYFVV), 139–159 (IISGLIIVVFFTLYTHSGFVS), 174–194 (FGLILVAFIVIFYTFFGGYLA), 200–220 (FFQGVIMLIAMVMVPIVAMMN), 240–260 (LFKGLSFIGIISLFSWGLGYF), 286–306 (ISWMAVGLLGAVAVGLTGIAF), 327–347 (VLFHPLVGGFLLAAILAAIMS), 381–401 (FVMIGRLSVLVVAIVAIAIAW), 410–430 (LVGNAWAGFGASFSPLVLFAL), 438–458 (AGAVSGMVSGALVVIVWIAWI), and 467–487 (IFGLYEIIPGFIVSVIVTYVV).

This sequence belongs to the sodium:solute symporter (SSF) (TC 2.A.21) family.

Its subcellular location is the cell membrane. The enzyme catalyses L-proline(in) + Na(+)(in) = L-proline(out) + Na(+)(out). Catalyzes the sodium-dependent uptake of extracellular L-proline. Since most S.aureus strains are L-proline auxotrophs, this transporter may aid the bacterial persistence during an infection of tissues with low proline concentrations. The polypeptide is Sodium/proline symporter (putP) (Staphylococcus aureus (strain Mu3 / ATCC 700698)).